Consider the following 442-residue polypeptide: Cytochrome c biogenesis CcmF C-terminal-like mitochondrial protein (442 aa).

The next 3 membrane-spanning stretches (helical) occupy residues 6–26 (NFFF…PVLL), 39–59 (PFFN…LVYL), and 122–142 (YLES…FFLA). Residues 151–175 (RARRRKGQTLRPNGNEQRRNDKMRC) form a disordered region. Positions 166 to 175 (EQRRNDKMRC) are enriched in basic and acidic residues. A helical membrane pass occupies residues 411–431 (FIFFIWIGFMLASLGGLPSLL).

This sequence belongs to the CcmF/CycK/Ccl1/NrfE/CcsA family. As to quaternary structure, interacts with CCMFN2.

The protein resides in the mitochondrion inner membrane. In terms of biological role, forms a complex with CCMFN1, CCMFN2 and CCMH that performs the assembly of heme with c-type apocytochromes in mitochondria. The protein is Cytochrome c biogenesis CcmF C-terminal-like mitochondrial protein (CCMFC) of Arabidopsis thaliana (Mouse-ear cress).